The primary structure comprises 113 residues: T cell receptor alpha variable 5 (113 aa).

A signal peptide spans 1 to 22; the sequence is MKTFAGFSFLFLWLQLDCMSRG. One can recognise an Ig-like domain in the interval 23–113; that stretch reads EDVEQSLFLS…DSAIYFCAES (91 aa). N-linked (GlcNAc...) asparagine glycosylation is present at asparagine 42. A disulfide bond links cysteine 43 and cysteine 110.

Alpha-beta TR is a heterodimer composed of an alpha and beta chain; disulfide-linked. The alpha-beta TR is associated with the transmembrane signaling CD3 coreceptor proteins to form the TR-CD3 (TcR or TCR). The assembly of alpha-beta TR heterodimers with CD3 occurs in the endoplasmic reticulum where a single alpha-beta TR heterodimer associates with one CD3D-CD3E heterodimer, one CD3G-CD3E heterodimer and one CD247 homodimer forming a stable octameric structure. CD3D-CD3E and CD3G-CD3E heterodimers preferentially associate with TR alpha and TR beta chains, respectively. The association of the CD247 homodimer is the last step of TcR assembly in the endoplasmic reticulum and is required for transport to the cell surface.

The protein resides in the cell membrane. V region of the variable domain of T cell receptor (TR) alpha chain that participates in the antigen recognition. Alpha-beta T cell receptors are antigen specific receptors which are essential to the immune response and are present on the cell surface of T lymphocytes. Recognize peptide-major histocompatibility (MH) (pMH) complexes that are displayed by antigen presenting cells (APC), a prerequisite for efficient T cell adaptive immunity against pathogens. Binding of alpha-beta TR to pMH complex initiates TR-CD3 clustering on the cell surface and intracellular activation of LCK that phosphorylates the ITAM motifs of CD3G, CD3D, CD3E and CD247 enabling the recruitment of ZAP70. In turn ZAP70 phosphorylates LAT, which recruits numerous signaling molecules to form the LAT signalosome. The LAT signalosome propagates signal branching to three major signaling pathways, the calcium, the mitogen-activated protein kinase (MAPK) kinase and the nuclear factor NF-kappa-B (NF-kB) pathways, leading to the mobilization of transcription factors that are critical for gene expression and essential for T cell growth and differentiation. The T cell repertoire is generated in the thymus, by V-(D)-J rearrangement. This repertoire is then shaped by intrathymic selection events to generate a peripheral T cell pool of self-MH restricted, non-autoaggressive T cells. Post-thymic interaction of alpha-beta TR with the pMH complexes shapes TR structural and functional avidity. This Homo sapiens (Human) protein is T cell receptor alpha variable 5.